The sequence spans 88 residues: Putative membrane protein insertion efficiency factor (88 aa).

Residues 67 to 88 form a disordered region; that stretch reads LNAGGYDPVPPKSDNHSKENKK. A compositionally biased stretch (basic and acidic residues) spans 79 to 88; that stretch reads SDNHSKENKK.

The protein belongs to the UPF0161 family.

It is found in the cell inner membrane. Could be involved in insertion of integral membrane proteins into the membrane. The chain is Putative membrane protein insertion efficiency factor from Actinobacillus succinogenes (strain ATCC 55618 / DSM 22257 / CCUG 43843 / 130Z).